Reading from the N-terminus, the 188-residue chain is Large ribosomal subunit protein uL6 (188 aa).

This sequence belongs to the universal ribosomal protein uL6 family.

The chain is Large ribosomal subunit protein uL6 (RPL9) from Tetrahymena thermophila (strain SB210).